Here is a 239-residue protein sequence, read N- to C-terminus: Cysteine-rich venom protein ENH1 (239 aa).

A signal peptide spans 1-18; it reads MIVFILLSLAAVLQQFVA. Residues 37–165 form the SCP domain; it reads VDMHNSFRRS…PYNYFYVCQY (129 aa). Cystine bridges form between cysteine 74–cysteine 152, cysteine 91–cysteine 166, cysteine 147–cysteine 163, cysteine 185–cysteine 192, cysteine 188–cysteine 197, cysteine 210–cysteine 228, and cysteine 219–cysteine 232. The region spanning 201-234 is the ShKT domain; it reads CPITNTFTNCDSLLQQNSCEDSYIKTNCGASCFC.

Belongs to the CRISP family. Expressed by the venom gland.

It is found in the secreted. Its function is as follows. Blocks contraction of smooth muscle elicited by high potassium-induced depolarization, but does not block caffeine-stimulated contraction. May target voltage-gated calcium channels on smooth muscle. This is Cysteine-rich venom protein ENH1 from Pseudoferania polylepis (Macleay's water snake).